A 431-amino-acid chain; its full sequence is 5-methylthioadenosine/S-adenosylhomocysteine deaminase (431 aa).

H64 and H66 together coordinate Zn(2+). Substrate contacts are provided by E93, R145, and H183. H210 contributes to the Zn(2+) binding site. Substrate-binding residues include E213 and D299. D299 is a Zn(2+) binding site.

It belongs to the metallo-dependent hydrolases superfamily. MTA/SAH deaminase family. It depends on Zn(2+) as a cofactor.

The enzyme catalyses S-adenosyl-L-homocysteine + H2O + H(+) = S-inosyl-L-homocysteine + NH4(+). It carries out the reaction S-methyl-5'-thioadenosine + H2O + H(+) = S-methyl-5'-thioinosine + NH4(+). Catalyzes the deamination of 5-methylthioadenosine and S-adenosyl-L-homocysteine into 5-methylthioinosine and S-inosyl-L-homocysteine, respectively. Is also able to deaminate adenosine. This chain is 5-methylthioadenosine/S-adenosylhomocysteine deaminase, found in Syntrophomonas wolfei subsp. wolfei (strain DSM 2245B / Goettingen).